The chain runs to 135 residues: C-type lectin LmsL (135 aa).

Disulfide bonds link C3-C14, C31-C131, C38-C133, and C106-C123. The 123-residue stretch at 10 to 132 (MNGLCYKIFD…CESKNAFLCQ (123 aa)) folds into the C-type lectin domain. Ca(2+) contacts are provided by Q96, D98, E104, N119, and D120. A Galactose-binding motif is present at residues 96–98 (QPD).

It belongs to the true venom lectin family. Homodimer; disulfide-linked. In terms of tissue distribution, expressed by the venom gland.

The protein resides in the secreted. Its function is as follows. Galactose-binding protein which recognizes specific carbohydrate structures and agglutinates a variety of animal cells by binding to cell-surface glycoproteins and glycolipids. Is a calcium-dependent lectin. Shows high hemagglutinating activity, that is inhibited by lactose, galactose and inositol. The chain is C-type lectin LmsL from Lachesis stenophrys (Central American bushmaster).